We begin with the raw amino-acid sequence, 310 residues long: tRNA-cytidine(32) 2-sulfurtransferase (310 aa).

Residues 47-52 (SGGKDS) carry the PP-loop motif motif. [4Fe-4S] cluster contacts are provided by Cys-122, Cys-125, and Cys-213.

It belongs to the TtcA family. In terms of assembly, homodimer. It depends on Mg(2+) as a cofactor. The cofactor is [4Fe-4S] cluster.

It localises to the cytoplasm. The catalysed reaction is cytidine(32) in tRNA + S-sulfanyl-L-cysteinyl-[cysteine desulfurase] + AH2 + ATP = 2-thiocytidine(32) in tRNA + L-cysteinyl-[cysteine desulfurase] + A + AMP + diphosphate + H(+). It functions in the pathway tRNA modification. Its function is as follows. Catalyzes the ATP-dependent 2-thiolation of cytidine in position 32 of tRNA, to form 2-thiocytidine (s(2)C32). The sulfur atoms are provided by the cysteine/cysteine desulfurase (IscS) system. The polypeptide is tRNA-cytidine(32) 2-sulfurtransferase (Haemophilus influenzae (strain 86-028NP)).